Consider the following 330-residue polypeptide: Serpentine receptor class J-38 (330 aa).

7 consecutive transmembrane segments (helical) span residues 6–26, 43–63, 98–118, 135–155, 200–220, 253–273, and 285–305; these read IYIF…PIFV, LLLF…VVPI, LVAS…LVIY, LLLS…LGYA, TIIW…LALL, IPIV…IFGI, and GALG…LPIF.

It belongs to the nematode receptor-like protein srj family.

It localises to the membrane. In Caenorhabditis elegans, this protein is Serpentine receptor class J-38 (srj-38).